We begin with the raw amino-acid sequence, 309 residues long: Ketosamine-3-kinase (309 aa).

Position 20 is a phosphoserine (Ser-20). 89–91 is an ATP binding site; sequence EHL. Asp-217 functions as the Proton acceptor in the catalytic mechanism.

It belongs to the fructosamine kinase family.

The enzyme catalyses N(6)-D-ribulosyl-L-lysyl-[protein] + ATP = N(6)-(3-O-phospho-D-ribulosyl)-L-lysyl-[protein] + ADP + H(+). It catalyses the reaction N(6)-(D-psicosyl)-L-lysyl-[protein] + ATP = N(6)-(3-O-phospho-D-psicosyl)-L-lysyl-[protein] + ADP + H(+). Ketosamine-3-kinase involved in protein deglycation by mediating phosphorylation of ribuloselysine and psicoselysine on glycated proteins, to generate ribuloselysine-3 phosphate and psicoselysine-3 phosphate, respectively. Ribuloselysine-3 phosphate and psicoselysine-3 phosphate adducts are unstable and decompose under physiological conditions. Not able to phosphorylate fructoselysine. The polypeptide is Ketosamine-3-kinase (Mus musculus (Mouse)).